Consider the following 371-residue polypeptide: Leu/Ile/Val-binding protein homolog 1 (371 aa).

Residues 1-23 form the signal peptide; it reads MRKTLFSGVALAAVIAFGGSAWA.

The protein belongs to the leucine-binding protein family.

Component of an amino-acid transport system. This chain is Leu/Ile/Val-binding protein homolog 1, found in Brucella suis biovar 1 (strain 1330).